The chain runs to 1649 residues: DNA-directed RNA polymerase subunit beta' (1649 aa).

4 residues coordinate Zn(2+): cysteine 62, cysteine 64, cysteine 77, and cysteine 80. The Mg(2+) site is built by aspartate 746, aspartate 748, and aspartate 750. Residues cysteine 1077, cysteine 1268, cysteine 1275, and cysteine 1278 each contribute to the Zn(2+) site.

Belongs to the RNA polymerase beta' chain family. The RNAP catalytic core consists of 2 alpha, 1 beta, 1 beta' and 1 omega subunit. When a sigma factor is associated with the core the holoenzyme is formed, which can initiate transcription. Mg(2+) is required as a cofactor. The cofactor is Zn(2+).

It carries out the reaction RNA(n) + a ribonucleoside 5'-triphosphate = RNA(n+1) + diphosphate. DNA-dependent RNA polymerase catalyzes the transcription of DNA into RNA using the four ribonucleoside triphosphates as substrates. The sequence is that of DNA-directed RNA polymerase subunit beta' from Thermosipho africanus (strain TCF52B).